The following is a 337-amino-acid chain: MANIHRPRRGSLAYSPRKRAKSQVPKYHSWPARDGEPILQSFAGYKVGMTHVIMVDDHKNSPTEGKDIMVPVTIIEIPPMKVAAIRAYTADTYGKRALTEVWTEQLSTLLGRRITLPKKYSEEAGFKALSEAVAAGTVTELHALMYTQPDTLTGVPKKVPELMEVCIGGGTLEQKVEFAQSIIGNEVNLADVIGAGEYADVTAITTGKGTQGPVKRWGIMLRKRKHSRGGKKRHIGNLGPWNPHHVRWQVPQMGQMGYQQRTDFNKRILKIGENGTDITPAGGFLHYGLLRNPYVMIKGSVPGPVKRLIRIRPAVRKGEHHARVPAIEFVSTQSKQG.

It belongs to the universal ribosomal protein uL3 family. Part of the 50S ribosomal subunit. Forms a cluster with proteins L14 and L24e.

Functionally, one of the primary rRNA binding proteins, it binds directly near the 3'-end of the 23S rRNA, where it nucleates assembly of the 50S subunit. The sequence is that of Large ribosomal subunit protein uL3 from Methanosphaerula palustris (strain ATCC BAA-1556 / DSM 19958 / E1-9c).